The sequence spans 157 residues: Peptide methionine sulfoxide reductase MsrA (157 aa).

Cys-13 is a catalytic residue.

This sequence belongs to the MsrA Met sulfoxide reductase family.

It carries out the reaction L-methionyl-[protein] + [thioredoxin]-disulfide + H2O = L-methionyl-(S)-S-oxide-[protein] + [thioredoxin]-dithiol. It catalyses the reaction [thioredoxin]-disulfide + L-methionine + H2O = L-methionine (S)-S-oxide + [thioredoxin]-dithiol. Has an important function as a repair enzyme for proteins that have been inactivated by oxidation. Catalyzes the reversible oxidation-reduction of methionine sulfoxide in proteins to methionine. This chain is Peptide methionine sulfoxide reductase MsrA, found in Methanococcus maripaludis (strain C6 / ATCC BAA-1332).